A 318-amino-acid chain; its full sequence is Olfactory receptor-like protein COR3 (318 aa).

At 1–26 (MASGNCTTPTTFILSGLTDNPGLQMP) the chain is on the extracellular side. Residue Asn5 is glycosylated (N-linked (GlcNAc...) asparagine). A helical transmembrane segment spans residues 27 to 49 (LFMVFLAIYTITLLTNLGLIRLI). Residues 50 to 57 (SVDLHLQT) are Cytoplasmic-facing. A helical transmembrane segment spans residues 58–79 (PMYIFLQNLSFTDAAYSTVITP). The Extracellular portion of the chain corresponds to 80–100 (KMLATFLEERKTISYVGCILQ). Residues Cys97 and Cys179 are joined by a disulfide bond. Residues 101-120 (YFSFVLLTTSECLLLAVMAY) form a helical membrane-spanning segment. Residues 121–139 (DRYVAICKPLLYPAIMTKA) lie on the Cytoplasmic side of the membrane. A helical transmembrane segment spans residues 140–164 (VCWRLVESLYFLAFLNSLVHTCGLL). Topologically, residues 165-205 (KLSFCYSNVVNHFFCDISPLFQISSSSIAISELLVIISGSL) are extracellular. Residues 206–226 (FVMSSIIIILISYVFIILTVV) traverse the membrane as a helical segment. At 227-239 (MIRSKDGKYKAFS) the chain is on the cytoplasmic side. A helical transmembrane segment spans residues 240 to 260 (TCTSHLMAVSLFHGTVIFMYL). The Extracellular portion of the chain corresponds to 261 to 271 (RPVKLFSLDTD). A helical membrane pass occupies residues 272-292 (KIASLFYTVVIPMLNPLIYSW). The Cytoplasmic portion of the chain corresponds to 293–318 (RNKEVKDALRRLTATTFGFIDSKAVQ).

The protein belongs to the G-protein coupled receptor 1 family.

The protein localises to the cell membrane. Functionally, odorant receptor. The chain is Olfactory receptor-like protein COR3 (COR3) from Gallus gallus (Chicken).